The following is a 286-amino-acid chain: ATP synthase gamma chain (286 aa).

Belongs to the ATPase gamma chain family. F-type ATPases have 2 components, CF(1) - the catalytic core - and CF(0) - the membrane proton channel. CF(1) has five subunits: alpha(3), beta(3), gamma(1), delta(1), epsilon(1). CF(0) has three main subunits: a, b and c.

It localises to the cell inner membrane. Produces ATP from ADP in the presence of a proton gradient across the membrane. The gamma chain is believed to be important in regulating ATPase activity and the flow of protons through the CF(0) complex. The sequence is that of ATP synthase gamma chain from Pseudomonas fluorescens (strain Pf0-1).